The sequence spans 147 residues: Nucleoside diphosphate kinase (147 aa).

ATP-binding residues include Lys9, Phe57, Arg85, Thr91, Arg102, and Asn112. Residue His115 is the Pros-phosphohistidine intermediate of the active site.

This sequence belongs to the NDK family. Mg(2+) is required as a cofactor.

Its subcellular location is the cytoplasm. The catalysed reaction is a 2'-deoxyribonucleoside 5'-diphosphate + ATP = a 2'-deoxyribonucleoside 5'-triphosphate + ADP. It catalyses the reaction a ribonucleoside 5'-diphosphate + ATP = a ribonucleoside 5'-triphosphate + ADP. In terms of biological role, major role in the synthesis of nucleoside triphosphates other than ATP. The ATP gamma phosphate is transferred to the NDP beta phosphate via a ping-pong mechanism, using a phosphorylated active-site intermediate. In Ignicoccus hospitalis (strain KIN4/I / DSM 18386 / JCM 14125), this protein is Nucleoside diphosphate kinase.